The following is a 229-amino-acid chain: Flagellar calcium-binding protein TB-1.7G (229 aa).

The interval 1–25 (GSKNASNPKDGAASKGGKDGKTTAD) is disordered. The span at 16-25 (GGKDGKTTAD) shows a compositional bias: basic and acidic residues. 4 EF-hand domains span residues 44 to 79 (ESKS…ILKL), 80 to 115 (DEFT…LVEF), 126 to 161 (YDIF…LKEW), and 163 to 198 (VDIT…KKLQ). 5 residues coordinate Ca(2+): Asp-57, Asn-59, Thr-61, Lys-63, and Glu-68. Asp-139, Asp-141, Ser-143, Glu-150, Asp-176, Asn-178, Ser-180, and Glu-187 together coordinate Ca(2+). Residues 202–229 (DPDDEENGANEGDGANAGDGVPAAEGSA) are disordered. The segment covering 210–221 (ANEGDGANAGDG) has biased composition (low complexity).

The protein belongs to the calflagin family.

It is found in the cell projection. The protein localises to the cilium. It localises to the flagellum. Functionally, may contribute to the rapid motility of the trypanosomes, playing a role either in flagellar structure or in calcium metabolism. Could alternate between a GDP-bound inactive form to a calcium/GTP-bound active form. This chain is Flagellar calcium-binding protein TB-1.7G, found in Trypanosoma brucei brucei.